We begin with the raw amino-acid sequence, 132 residues long: MSMTDPIADLLVRIKNAAAVGKPTVKLPSSKIKVAIAQVLKDEGYITDLRVTATENNKSELEIVLKYFEGRPVIETLKRFSRSGLRQYRGKTELPKVLGGLGIAIISTSKGIMTDAQAREAGVGGEVLCFVA.

This sequence belongs to the universal ribosomal protein uS8 family. As to quaternary structure, part of the 30S ribosomal subunit. Contacts proteins S5 and S12.

One of the primary rRNA binding proteins, it binds directly to 16S rRNA central domain where it helps coordinate assembly of the platform of the 30S subunit. This is Small ribosomal subunit protein uS8 from Xanthomonas oryzae pv. oryzae (strain MAFF 311018).